We begin with the raw amino-acid sequence, 72 residues long: Penaeidin-2d (72 aa).

The first 21 residues, 1–21 (MRLVVCLVFLASFALVCQGGA), serve as a signal peptide directing secretion. Glutamine 22 carries the post-translational modification Pyrrolidone carboxylic acid. 3 cysteine pairs are disulfide-bonded: cysteine 45–cysteine 59, cysteine 48–cysteine 66, and cysteine 60–cysteine 67. Lysine 71 is modified (lysine amide).

The protein belongs to the penaeidin family.

It localises to the cytoplasmic granule. Antibacterial and antifungal activity. Presents chitin-binding activity. The sequence is that of Penaeidin-2d from Penaeus setiferus (Atlantic white shrimp).